Here is a 223-residue protein sequence, read N- to C-terminus: Deoxyribose-phosphate aldolase (223 aa).

Asp-89 acts as the Proton donor/acceptor in catalysis. The active-site Schiff-base intermediate with acetaldehyde is Lys-152. Lys-181 (proton donor/acceptor) is an active-site residue.

Belongs to the DeoC/FbaB aldolase family. DeoC type 1 subfamily.

The protein localises to the cytoplasm. It carries out the reaction 2-deoxy-D-ribose 5-phosphate = D-glyceraldehyde 3-phosphate + acetaldehyde. The protein operates within carbohydrate degradation; 2-deoxy-D-ribose 1-phosphate degradation; D-glyceraldehyde 3-phosphate and acetaldehyde from 2-deoxy-alpha-D-ribose 1-phosphate: step 2/2. Catalyzes a reversible aldol reaction between acetaldehyde and D-glyceraldehyde 3-phosphate to generate 2-deoxy-D-ribose 5-phosphate. The sequence is that of Deoxyribose-phosphate aldolase from Bacillus cereus (strain B4264).